The primary structure comprises 81 residues: ATP synthase subunit c, chloroplastic (81 aa).

2 helical membrane-spanning segments follow: residues 3-23 (PIIS…ASIG) and 57-77 (LAFM…LLFA).

The protein belongs to the ATPase C chain family. F-type ATPases have 2 components, F(1) - the catalytic core - and F(0) - the membrane proton channel. F(1) has five subunits: alpha(3), beta(3), gamma(1), delta(1), epsilon(1). F(0) has four main subunits: a(1), b(1), b'(1) and c(10-14). The alpha and beta chains form an alternating ring which encloses part of the gamma chain. F(1) is attached to F(0) by a central stalk formed by the gamma and epsilon chains, while a peripheral stalk is formed by the delta, b and b' chains.

It is found in the plastid. Its subcellular location is the chloroplast thylakoid membrane. In terms of biological role, f(1)F(0) ATP synthase produces ATP from ADP in the presence of a proton or sodium gradient. F-type ATPases consist of two structural domains, F(1) containing the extramembraneous catalytic core and F(0) containing the membrane proton channel, linked together by a central stalk and a peripheral stalk. During catalysis, ATP synthesis in the catalytic domain of F(1) is coupled via a rotary mechanism of the central stalk subunits to proton translocation. Functionally, key component of the F(0) channel; it plays a direct role in translocation across the membrane. A homomeric c-ring of between 10-14 subunits forms the central stalk rotor element with the F(1) delta and epsilon subunits. The chain is ATP synthase subunit c, chloroplastic from Cicer arietinum (Chickpea).